The following is a 154-amino-acid chain: Myoglobin (154 aa).

The Globin domain maps to 2-148 (GLSDGEWQLV…FRNDIAAKYK (147 aa)). Phosphoserine is present on Ser-4. His-65 is a binding site for nitrite. His-65 lines the O2 pocket. Position 68 is a phosphothreonine (Thr-68). His-94 serves as a coordination point for heme b.

The protein belongs to the globin family. Monomeric.

Its subcellular location is the cytoplasm. The protein resides in the sarcoplasm. The enzyme catalyses Fe(III)-heme b-[protein] + nitric oxide + H2O = Fe(II)-heme b-[protein] + nitrite + 2 H(+). It carries out the reaction H2O2 + AH2 = A + 2 H2O. Monomeric heme protein which primary function is to store oxygen and facilitate its diffusion within muscle tissues. Reversibly binds oxygen through a pentacoordinated heme iron and enables its timely and efficient release as needed during periods of heightened demand. Depending on the oxidative conditions of tissues and cells, and in addition to its ability to bind oxygen, it also has a nitrite reductase activity whereby it regulates the production of bioactive nitric oxide. Under stress conditions, like hypoxia and anoxia, it also protects cells against reactive oxygen species thanks to its pseudoperoxidase activity. This chain is Myoglobin (MB), found in Proechimys guairae (Guaira spiny rat).